Reading from the N-terminus, the 363-residue chain is Peptide chain release factor 2 (363 aa).

Gln251 is modified (N5-methylglutamine).

This sequence belongs to the prokaryotic/mitochondrial release factor family. Post-translationally, methylated by PrmC. Methylation increases the termination efficiency of RF2.

The protein localises to the cytoplasm. Its function is as follows. Peptide chain release factor 2 directs the termination of translation in response to the peptide chain termination codons UGA and UAA. This chain is Peptide chain release factor 2, found in Helicobacter pylori (strain P12).